The following is a 246-amino-acid chain: ATP synthase subunit a (246 aa).

Positions 1-3 (MIY) are cleaved as a propeptide — removed in mature form. 7 helical membrane-spanning segments follow: residues 25-45 (VNNY…SVFL), 51-71 (LGFN…LNMV), 79-99 (GGMY…ANLV), 112-132 (LVAI…MGLS), 138-158 (FFAL…LVLI), 178-198 (VLSG…LMGS), and 203-223 (FMGG…EFAI).

This sequence belongs to the ATPase A chain family. As to quaternary structure, F-type ATPases have 2 components, CF(1) - the catalytic core - and CF(0) - the membrane proton channel. CF(1) has five subunits: alpha(3), beta(3), gamma(1), delta(1), epsilon(1). CF(0) has three main subunits: a, b and c.

Its subcellular location is the mitochondrion inner membrane. Its function is as follows. Mitochondrial membrane ATP synthase (F(1)F(0) ATP synthase or Complex V) produces ATP from ADP in the presence of a proton gradient across the membrane which is generated by electron transport complexes of the respiratory chain. F-type ATPases consist of two structural domains, F(1) - containing the extramembraneous catalytic core and F(0) - containing the membrane proton channel, linked together by a central stalk and a peripheral stalk. During catalysis, ATP synthesis in the catalytic domain of F(1) is coupled via a rotary mechanism of the central stalk subunits to proton translocation. Key component of the proton channel; it may play a direct role in the translocation of protons across the membrane. The polypeptide is ATP synthase subunit a (ATP6) (Debaryomyces hansenii (strain ATCC 36239 / CBS 767 / BCRC 21394 / JCM 1990 / NBRC 0083 / IGC 2968) (Yeast)).